A 493-amino-acid chain; its full sequence is Alpha-amylase-related protein (493 aa).

The signal sequence occupies residues 1–19 (MFKFALTQTLCLAGSLSLA). Q20 carries the pyrrolidone carboxylic acid modification. C47 and C103 are disulfide-bonded. Ca(2+) contacts are provided by N117, Q168, and D177. An intrachain disulfide couples C156 to C170. Chloride is bound at residue R205. D207 functions as the Nucleophile in the catalytic mechanism. H211 serves as a coordination point for Ca(2+). The active-site Proton donor is E244. 2 residues coordinate chloride: N307 and R342. 3 disulfide bridges follow: C375–C381, C417–C440, and C447–C459.

The protein belongs to the glycosyl hydrolase 13 family. In terms of assembly, monomer. The cofactor is Ca(2+). Requires chloride as cofactor.

It is found in the secreted. It carries out the reaction Endohydrolysis of (1-&gt;4)-alpha-D-glucosidic linkages in polysaccharides containing three or more (1-&gt;4)-alpha-linked D-glucose units.. This is Alpha-amylase-related protein (Amyrel) from Drosophila mauritiana (Fruit fly).